The sequence spans 258 residues: MKIAILYREEKEKEGVLLKEKLSREHEVVSFHEASASNVVDADLIVVVGGDGTMLRAARKAADGTPLVGFKAGRLGFLTSYTLEEVDQFLEDLRKGNFREELRWFIRVESDIGSHLALNDATLERDLSGKMVEIEVNVEHHSSMWFFADGVVVASPTGSTAYSLSIGGPIIFPECEVLEISPIAPQFFLTRSVVIPSSFKVTVECQREINLLIDGTMVGKTRRVIVQKAEKYVKILRPIKYDYVAVIREKLGYGRRIE.

The active-site Proton acceptor is aspartate 51. Residues 51–52, arginine 56, 119–120, lysine 130, aspartate 149, 160–165, and alanine 184 each bind NAD(+); these read DG, ND, and TAYSLS.

It belongs to the NAD kinase family. A divalent metal cation serves as cofactor.

It localises to the cytoplasm. It carries out the reaction NAD(+) + ATP = ADP + NADP(+) + H(+). Functionally, involved in the regulation of the intracellular balance of NAD and NADP, and is a key enzyme in the biosynthesis of NADP. Catalyzes specifically the phosphorylation on 2'-hydroxyl of the adenosine moiety of NAD to yield NADP. The chain is NAD kinase from Thermotoga neapolitana (strain ATCC 49049 / DSM 4359 / NBRC 107923 / NS-E).